Consider the following 637-residue polypeptide: Biosynthetic arginine decarboxylase (637 aa).

Position 101 is an N6-(pyridoxal phosphate)lysine (lysine 101). Residue 286 to 296 (FDVGGGLAVDY) participates in substrate binding.

Belongs to the Orn/Lys/Arg decarboxylase class-II family. SpeA subfamily. Mg(2+) is required as a cofactor. It depends on pyridoxal 5'-phosphate as a cofactor.

The enzyme catalyses L-arginine + H(+) = agmatine + CO2. It functions in the pathway amine and polyamine biosynthesis; agmatine biosynthesis; agmatine from L-arginine: step 1/1. Catalyzes the biosynthesis of agmatine from arginine. This chain is Biosynthetic arginine decarboxylase, found in Shewanella baltica (strain OS223).